Here is a 4574-residue protein sequence, read N- to C-terminus: E3 ubiquitin-protein ligase MYCBP2 (4574 aa).

Disordered stretches follow at residues 92–115 and 599–620; these read RGKK…VKTR and SASK…PYKP. 4 RCC1 repeats span residues 591–646, 690–746, 943–993, and 995–1051; these read DGSV…IVTK, SGEV…MMCQ, NGDV…VLLM, and GQVF…LRID. Positions 611–620 are enriched in basic residues; it reads SRRQPKPYKP. Cysteine 1733 and cysteine 1850 are joined by a disulfide. Disordered stretches follow at residues 1976-1998 and 2313-2332; these read APPT…EQGL and LQRL…LTFG. Composition is skewed to polar residues over residues 1981-1998 and 2317-2328; these read NPNQ…EQGL and PGTSSNSATGTD. The stretch at 2336–2417 is one Filamin repeat; it reads APKLEATYEP…IHVTIDGIEI (82 aa). 5 disordered regions span residues 2613 to 2824, 2845 to 2922, 3085 to 3116, 3345 to 3365, and 3505 to 3526; these read GFDY…PSPH, SNDE…KQAM, SPGS…KAEV, PGSN…TDSD, and FETE…EQEK. Composition is skewed to basic and acidic residues over residues 2639–2663 and 2678–2688; these read HRQE…KSKN and DTGKLRSDSHS. The span at 2716-2729 shows a compositional bias: polar residues; sequence NPGSRSSSPKQKTF. Residues 2730–2745 show a composition bias toward low complexity; sequence TSGRSSPSSTSSPRSS. 3 stretches are compositionally biased toward basic and acidic residues: residues 2761–2772, 2854–2864, and 2874–2883; these read VHLDPPRERSKS, SELHNAEEGSS, and PVKEELESRS. Basic residues-rich tracts occupy residues 2887-2900 and 3102-3111; these read VSRK…RPKK and KKTKKEKKKK. Over residues 3515–3526 the composition is skewed to basic and acidic residues; it reads NKGNKENLEQEK. One can recognise a DOC domain in the interval 3617–3795; it reads FNISVQSGYE…SVAQQKNCEA (179 aa). Positions 3815-3841 are disordered; it reads GDAEPTPEQEEKNLLSSPEGEDKAPSD. Residues cysteine 4324, cysteine 4327, cysteine 4342, histidine 4344, histidine 4347, cysteine 4350, cysteine 4371, cysteine 4374, cysteine 4440, and cysteine 4443 each coordinate Zn(2+). The RING-type; atypical zinc-finger motif lies at 4324-4375; it reads CMICFTEALSAAPAIQLDCSHVFHLQCTRRVLENRWLGPRITFGFMSCPICK. Positions 4435 to 4572 are tandem cysteine domain; sequence YAYYVCFKCK…LGCGVCRNAH (138 aa). Cysteine 4454 is an active-site residue. Zn(2+) is bound by residues cysteine 4471, cysteine 4474, cysteine 4483, histidine 4486, cysteine 4495, cysteine 4498, and cysteine 4499. The active site involves cysteine 4506. Positions 4513, 4516, 4534, 4548, 4554, 4565, and 4568 each coordinate Zn(2+).

Belongs to the RING-Cys relay (RCR) family. As to expression, widely expressed when the visual system begins developing. In the eye, expressed in all cells, including retinal ganglion cells, with no obvious gradient.

The protein resides in the nucleus. It localises to the cell projection. The protein localises to the axon. Its subcellular location is the cytoplasm. It is found in the cytoskeleton. It carries out the reaction [E2 ubiquitin-conjugating enzyme]-S-ubiquitinyl-L-cysteine + [acceptor protein]-L-threonine = [E2 ubiquitin-conjugating enzyme]-L-cysteine + [acceptor protein]-3-O-ubiquitinyl-L-threonine.. It functions in the pathway protein modification; protein ubiquitination. Functionally, atypical E3 ubiquitin-protein ligase which specifically mediates ubiquitination of threonine and serine residues on target proteins, instead of ubiquitinating lysine residues. Shows esterification activity towards both threonine and serine, with a preference for threonine, and acts via two essential catalytic cysteine residues that relay ubiquitin to its substrate via thioester intermediates. Interacts with the E2 enzymes UBE2D1, UBE2D3, UBE2E1 and UBE2L3. Plays a key role in neural development, probably by mediating ubiquitination of threonine residues on target proteins. Involved in different processes such as regulation of neurite outgrowth, synaptic growth, synaptogenesis and axon degeneration. Required in the visual system for correct fasciculation, targeting and mapping of retinal axons. Acts as a regulator of pteridine synthesis. May play a role in the regulation of the circadian clock gene expression. The polypeptide is E3 ubiquitin-protein ligase MYCBP2 (Danio rerio (Zebrafish)).